The sequence spans 195 residues: 3-isopropylmalate dehydratase small subunit (195 aa).

The protein belongs to the LeuD family. LeuD type 1 subfamily. As to quaternary structure, heterodimer of LeuC and LeuD.

The enzyme catalyses (2R,3S)-3-isopropylmalate = (2S)-2-isopropylmalate. It functions in the pathway amino-acid biosynthesis; L-leucine biosynthesis; L-leucine from 3-methyl-2-oxobutanoate: step 2/4. Its function is as follows. Catalyzes the isomerization between 2-isopropylmalate and 3-isopropylmalate, via the formation of 2-isopropylmaleate. In Koribacter versatilis (strain Ellin345), this protein is 3-isopropylmalate dehydratase small subunit.